Reading from the N-terminus, the 91-residue chain is Small ribosomal subunit protein bS20 (91 aa).

It belongs to the bacterial ribosomal protein bS20 family.

Functionally, binds directly to 16S ribosomal RNA. This chain is Small ribosomal subunit protein bS20, found in Wolinella succinogenes (strain ATCC 29543 / DSM 1740 / CCUG 13145 / JCM 31913 / LMG 7466 / NCTC 11488 / FDC 602W) (Vibrio succinogenes).